A 490-amino-acid chain; its full sequence is MTDSIHGGHPNIIRSCGASESMWTASHALGLYLRVSNIATLTIPTWKAKFKKSSASHFIRTAVVQVMLKQPAMRVGIIGENSKQPRFVALSSVDFSQQVEYAEAPSVDSVARSLEKLLLQPWPNLSKRPGWHVRVFHEPSSADKDVCRLRICLTVHHAIFDGESTARFHTSLIDALNNPDPAVARMMDKSPVVNLTGDCRDYPLTQEELINFTADIFWIASELWNILAPSFLKPFTFQTWAGEPYNPDIQAINIRYLSLNPIVTQAVVKRCREEKTTMTNLLNTLCATSLARRVPLTERQGFVNLTAVSLRPWIPENLHPNKTCMSVCASSHAQDFGPDVLAKIRQAEDATIWELAVKLRQDMKRRTDTMPHNEFSYLLRYAGDWRDIFQARYGKPRRELWTLSNLGSIATPASKGPWELESVLFAQFAPVVSCALAVNAASVEGGDMMVSLVWQDGILETDLVEGVRDDLEMWLLGLGNEGNLGISSSM.

This sequence belongs to the alcohol acetyltransferase FCK4 family.

It participates in secondary metabolite biosynthesis. Functionally, probable alcohol acetyltransferase; part of the gene cluster that mediates the biosynthesis of cytokinins such as fusatin, fusatinic acids or 8-oxofusatin, known for their growth promoting and anti-senescence activities toward host plants. FCK1 is a bifunctional enzyme that performs the first steps in the biosynthesis of Fusarium cytokinins. It first condenses adenosine monophosphate (AMP) with dimethylallyl diphosphate (DMAPP) to yield isoprenyl adenosine monophosphate. It then catalyzes the removal of the phosphoribose to produce isopentenylaldehyde. The cytochrome P450 monooxygenase then converts isopentenylaldehyde to trans-zeatin. A condensation step converts trans-zeatin to fusatin which is further modified to produce fusatinic acid. The mechanism for oxidation of fusatin to fusatinic acid remains unknown. 8-oxofusatin could be produced through several pathways, via direct oxygenation of fusatin, or via the 8-oxo-pentenyladenine intermediate which itself must arise from either the prenylation of 8-oxo-AMP by FCK1 and/or oxygenation of isopentenylaldehyde. Both the FCK3 and FCK4 enzymes act downstream of the identified cytokinins to produce yet unidentified compounds. The polypeptide is Probable alcohol acetyltransferase FCK4 (Fusarium pseudograminearum (strain CS3096) (Wheat and barley crown-rot fungus)).